A 200-amino-acid polypeptide reads, in one-letter code: Putative calcium-activated potassium channel subunit beta (200 aa).

Residues 1–19 (MLAKKLVTAQKRGETRALC) lie on the Cytoplasmic side of the membrane. Residues 20 to 40 (LGLGMVACSMMMYFFIGITIV) traverse the membrane as a helical segment. The Extracellular portion of the chain corresponds to 41-166 (PFYTKSVWTT…LSRLYPPKGL (126 aa)). Asparagine 89 carries an N-linked (GlcNAc...) asparagine glycan. The helical transmembrane segment at 167–187 (LFTFLWPTLMFTGGCLIIVLV) threads the bilayer. Over 188-200 (KISQYFSVLSARQ) the chain is Cytoplasmic.

This sequence belongs to the KCNMB (TC 8.A.14.1) family. KCNMB1 subfamily. Probably interacts with KCNMA1 tetramer.

The protein localises to the membrane. Its function is as follows. Probable regulatory subunit of the calcium activated potassium KCNMA1 (maxiK) channel that modulates the calcium sensitivity and gating kinetics of KCNMA1, thereby contributing to KCNMA1 channel diversity. Increases the apparent Ca(2+)/voltage sensitivity of the KCNMA1 channel. The polypeptide is Putative calcium-activated potassium channel subunit beta (KCNMB1) (Coturnix japonica (Japanese quail)).